Reading from the N-terminus, the 570-residue chain is Set1/Ash2 histone methyltransferase complex subunit ash-2 (570 aa).

The segment at 19 to 76 (TTVCYCDGKRELGSVEVVCSTCLKWFHGRCLKEFHELNSNGVPFMICYTFTCKQCRPT) adopts a PHD-type zinc-finger fold. The disordered stretch occupies residues 201–242 (NREPRHIELPPIEGPKTRGASKRRHAEAPVTGKKQKLAADYS). The B30.2/SPRY domain occupies 270–468 (PNVPEDPAWN…TLVEMPGSYI (199 aa)).

In terms of assembly, component of the SET2 complex (also known as the SET1/COMPASS complex), which contains at least set-2, swd-2.1, cfp-1, rbbp-5, wdr-5.1, dpy-30 and ash-2. Within the complex, interacts with cfp-1 and wdr-5.1. Expressed in somatic and germline tissues (at protein level).

It is found in the nucleus. Component of the set-2/ash-2 histone methyltransferase (HMT) complex. Required for the di- and trimethylation at 'Lys-4' of histone H3, a mark associated with epigenetic transcriptional activation. Implicated in the epigenetic inheritance of lifespan over several generations. Functions as a transcriptional regulator. Acts in the germline to limit the longevity of the soma, probably by regulating a lipid metabolism pathway that signals from the germline to the intestine, thereby preventing accumulation of mono-unsaturated fatty acids. The protein is Set1/Ash2 histone methyltransferase complex subunit ash-2 of Caenorhabditis elegans.